Here is a 219-residue protein sequence, read N- to C-terminus: Proteasome subunit beta type-9 (219 aa).

Residues 1 to 20 constitute a propeptide, removed in mature form; the sequence is MLRAGAPTAGSFRTKEVHTG. T21 acts as the Nucleophile in catalysis. K53 and K109 each carry N6-acetyllysine.

The protein belongs to the peptidase T1B family. As to quaternary structure, the 26S proteasome consists of a 20S proteasome core and two 19S regulatory subunits. The 20S proteasome core is composed of 28 subunits that are arranged in four stacked rings, resulting in a barrel-shaped structure. The two end rings are each formed by seven alpha subunits, and the two central rings are each formed by seven beta subunits. The catalytic chamber with the active sites is on the inside of the barrel. Component of the immunoproteasome, where it displaces the equivalent housekeeping subunit PSMB6. Component of the spermatoproteasome, a form of the proteasome specifically found in testis. Autocleaved. The resulting N-terminal Thr residue of the mature subunit is responsible for the nucleophile proteolytic activity.

Its subcellular location is the cytoplasm. The protein localises to the nucleus. The catalysed reaction is Cleavage of peptide bonds with very broad specificity.. The proteasome is a multicatalytic proteinase complex which is characterized by its ability to cleave peptides with Arg, Phe, Tyr, Leu, and Glu adjacent to the leaving group at neutral or slightly basic pH. The proteasome has an ATP-dependent proteolytic activity. This subunit is involved in antigen processing to generate class I binding peptides. This Mus platythrix (Flat-haired mouse) protein is Proteasome subunit beta type-9 (Psmb9).